Consider the following 188-residue polypeptide: uncharacterized protein (188 aa).

This sequence belongs to the isochorismatase family.

This is an uncharacterized protein from Escherichia coli O157:H7.